Here is a 182-residue protein sequence, read N- to C-terminus: UPF0301 protein NMB1336 (182 aa).

The protein belongs to the UPF0301 (AlgH) family.

The protein is UPF0301 protein NMB1336 of Neisseria meningitidis serogroup B (strain ATCC BAA-335 / MC58).